We begin with the raw amino-acid sequence, 134 residues long: Large ribosomal subunit protein uL22 (134 aa).

It belongs to the universal ribosomal protein uL22 family. Part of the 50S ribosomal subunit. Contacts protein L32.

Functionally, this protein binds specifically to 23S rRNA; its binding is stimulated by other ribosomal proteins, e.g. L4, L17, and L20. It is important during the early stages of 50S assembly. It makes multiple contacts with different domains of the 23S rRNA in the assembled 50S subunit and ribosome. Its function is as follows. The globular domain of the protein is located by the polypeptide exit tunnel on the outside of the subunit while an extended beta-hairpin forms part of the wall of the tunnel. Forms a pair of 'tweezers' with L32 that hold together two different domains of the 23S rRNA. Interacts with the tunnel-blocking modified macrolide azithromycin. Upon binding of the macrolide troleadomycin to the ribosome, the tip of the beta-hairpin is displaced, which severely restricts the tunnel. This and experiments in E.coli have led to the suggestion that it is part of the gating mechanism involved in translation arrest in the absence of the protein export system. In Deinococcus radiodurans (strain ATCC 13939 / DSM 20539 / JCM 16871 / CCUG 27074 / LMG 4051 / NBRC 15346 / NCIMB 9279 / VKM B-1422 / R1), this protein is Large ribosomal subunit protein uL22 (rplV).